Here is a 335-residue protein sequence, read N- to C-terminus: Holliday junction branch migration complex subunit RuvB (335 aa).

Residues 4 to 184 (ADRIISGQAK…FGIVQRLEFY (181 aa)) are large ATPase domain (RuvB-L). ATP is bound by residues Ile23, Arg24, Gly65, Lys68, Thr69, Thr70, 131–133 (EDY), Arg174, Tyr184, and Arg221. Residue Thr69 participates in Mg(2+) binding. Residues 185–255 (SVEDLTSIVA…VAKQALSMLD (71 aa)) form a small ATPAse domain (RuvB-S) region. The segment at 258–335 (DAGFDYLDRK…RHFGLQKLSD (78 aa)) is head domain (RuvB-H). The DNA site is built by Arg294, Arg313, and Arg318.

It belongs to the RuvB family. In terms of assembly, homohexamer. Forms an RuvA(8)-RuvB(12)-Holliday junction (HJ) complex. HJ DNA is sandwiched between 2 RuvA tetramers; dsDNA enters through RuvA and exits via RuvB. An RuvB hexamer assembles on each DNA strand where it exits the tetramer. Each RuvB hexamer is contacted by two RuvA subunits (via domain III) on 2 adjacent RuvB subunits; this complex drives branch migration. In the full resolvosome a probable DNA-RuvA(4)-RuvB(12)-RuvC(2) complex forms which resolves the HJ.

It is found in the cytoplasm. The catalysed reaction is ATP + H2O = ADP + phosphate + H(+). In terms of biological role, the RuvA-RuvB-RuvC complex processes Holliday junction (HJ) DNA during genetic recombination and DNA repair, while the RuvA-RuvB complex plays an important role in the rescue of blocked DNA replication forks via replication fork reversal (RFR). RuvA specifically binds to HJ cruciform DNA, conferring on it an open structure. The RuvB hexamer acts as an ATP-dependent pump, pulling dsDNA into and through the RuvAB complex. RuvB forms 2 homohexamers on either side of HJ DNA bound by 1 or 2 RuvA tetramers; 4 subunits per hexamer contact DNA at a time. Coordinated motions by a converter formed by DNA-disengaged RuvB subunits stimulates ATP hydrolysis and nucleotide exchange. Immobilization of the converter enables RuvB to convert the ATP-contained energy into a lever motion, pulling 2 nucleotides of DNA out of the RuvA tetramer per ATP hydrolyzed, thus driving DNA branch migration. The RuvB motors rotate together with the DNA substrate, which together with the progressing nucleotide cycle form the mechanistic basis for DNA recombination by continuous HJ branch migration. Branch migration allows RuvC to scan DNA until it finds its consensus sequence, where it cleaves and resolves cruciform DNA. This Haemophilus influenzae (strain PittEE) protein is Holliday junction branch migration complex subunit RuvB.